The primary structure comprises 83 residues: MTDKAVYFDGQELPWYIAEDGIGFQPSNNGLHTLTVEFLVETATFKSQWEINHDGEWAWLKRTVDLEMRVQTRAFDRIMKEYS.

The protein is Gene 41 protein (41) of Mycobacterium phage L5 (Mycobacteriophage L5).